A 162-amino-acid polypeptide reads, in one-letter code: 2-C-methyl-D-erythritol 2,4-cyclodiphosphate synthase (162 aa).

Residues Asp-12 and His-14 each coordinate a divalent metal cation. Residues 12-14 (DVH) and 38-39 (HS) contribute to the 4-CDP-2-C-methyl-D-erythritol 2-phosphate site. Residue His-46 participates in a divalent metal cation binding. Residues 60-62 (DIG), 136-139 (TTTE), Phe-143, and Arg-146 each bind 4-CDP-2-C-methyl-D-erythritol 2-phosphate.

Belongs to the IspF family. Homotrimer. Requires a divalent metal cation as cofactor.

It catalyses the reaction 4-CDP-2-C-methyl-D-erythritol 2-phosphate = 2-C-methyl-D-erythritol 2,4-cyclic diphosphate + CMP. It participates in isoprenoid biosynthesis; isopentenyl diphosphate biosynthesis via DXP pathway; isopentenyl diphosphate from 1-deoxy-D-xylulose 5-phosphate: step 4/6. Its function is as follows. Involved in the biosynthesis of isopentenyl diphosphate (IPP) and dimethylallyl diphosphate (DMAPP), two major building blocks of isoprenoid compounds. Catalyzes the conversion of 4-diphosphocytidyl-2-C-methyl-D-erythritol 2-phosphate (CDP-ME2P) to 2-C-methyl-D-erythritol 2,4-cyclodiphosphate (ME-CPP) with a corresponding release of cytidine 5-monophosphate (CMP). In Porphyromonas gingivalis (strain ATCC BAA-308 / W83), this protein is 2-C-methyl-D-erythritol 2,4-cyclodiphosphate synthase.